The following is a 596-amino-acid chain: MHRYRSHTCAALRKTDVGSTVRISGWVHRVRDHGGVLFIDLRDHYGITQVVADPDSPAFKMAETVRGEWVIRIDGLVKARTEDTVNKAMATGEIELYAQEIEVLSAAKELPLPVFGEPDYPEDVRLKYRFLDLRRETLHKNIVKRTQVISAMRREMGNVGFTEYTTPILTASSPEGARDFLVPSRIHPGTFYALPQAPQQYKQLLMVAGFDRYFQIAPCFRDEDPRADRLPGEFYQLDLEMSFVTQEDVWDTMGPLMTSVFEEFAEGKPVTKEWPRIPYDEAIRKYGSDKPDLRNPIVMEAVTEHFAGSGFKVFAGMIASNPKVQIWAIPAKTGGSRAFCDRMNAWAQSQGQPGLGYIFWRSENDKLEGAGPLAKNIGEERTDAIRTQLGLGDGDACFFVAGEPEKFYKFAGEARTKAGEELNLVDRDRFELCWIVDFPFFEWSEEDKKVDFAHNPFSMPQGGLDALQNQDPLTIKAFQYDAVCNGFEIASGSIRNQSPETMVAAFEKVGLSQQDVEDRFGGLYRAFQYGAPPHGGAAFGIDRIVMLLVGAKNLREISVFPMNQQAQDLLMGAPSPATPTQLRELSIRPIPPVKKD.

Glu175 provides a ligand contact to L-aspartate. Positions 199–202 (QQYK) are aspartate. Residues Arg221 and His454 each contribute to the L-aspartate site. 221 to 223 (RDE) provides a ligand contact to ATP. ATP is bound at residue Glu488. Arg495 contacts L-aspartate. Residue 540-543 (GIDR) participates in ATP binding.

Belongs to the class-II aminoacyl-tRNA synthetase family. Type 1 subfamily. As to quaternary structure, homodimer.

It is found in the cytoplasm. It carries out the reaction tRNA(Asx) + L-aspartate + ATP = L-aspartyl-tRNA(Asx) + AMP + diphosphate. Its function is as follows. Aspartyl-tRNA synthetase with relaxed tRNA specificity since it is able to aspartylate not only its cognate tRNA(Asp) but also tRNA(Asn). Reaction proceeds in two steps: L-aspartate is first activated by ATP to form Asp-AMP and then transferred to the acceptor end of tRNA(Asp/Asn). This chain is Aspartate--tRNA(Asp/Asn) ligase, found in Rhizobium leguminosarum bv. trifolii (strain WSM2304).